Reading from the N-terminus, the 421-residue chain is Diaminopimelate decarboxylase (421 aa).

Lys-62 carries the N6-(pyridoxal phosphate)lysine modification. Pyridoxal 5'-phosphate is bound by residues Gly-237 and 279 to 282 (EPGR). Residues Arg-282, Arg-319, and Tyr-323 each contribute to the substrate site. Residue Cys-349 is the Proton donor of the active site. 2 residues coordinate substrate: Glu-350 and Tyr-379. Tyr-379 serves as a coordination point for pyridoxal 5'-phosphate.

Belongs to the Orn/Lys/Arg decarboxylase class-II family. LysA subfamily. Homodimer. Requires pyridoxal 5'-phosphate as cofactor.

It catalyses the reaction meso-2,6-diaminopimelate + H(+) = L-lysine + CO2. Its pathway is amino-acid biosynthesis; L-lysine biosynthesis via DAP pathway; L-lysine from DL-2,6-diaminopimelate: step 1/1. Functionally, specifically catalyzes the decarboxylation of meso-diaminopimelate (meso-DAP) to L-lysine. Plays a role in beta-lactam antibiotic resistance. This Staphylococcus aureus (strain COL) protein is Diaminopimelate decarboxylase (lysA).